A 491-amino-acid polypeptide reads, in one-letter code: 2,3-bisphosphoglycerate-independent phosphoglycerate mutase (491 aa).

Mn(2+) contacts are provided by Asp11 and Ser61. Ser61 (phosphoserine intermediate) is an active-site residue. Residues His118, 147-148 (RD), Arg177, Arg183, 247-250 (RNDR), and Lys320 each bind substrate. Residues Asp386, His390, Asp427, His428, and His445 each coordinate Mn(2+).

Belongs to the BPG-independent phosphoglycerate mutase family. As to quaternary structure, monomer. Requires Mn(2+) as cofactor.

It catalyses the reaction (2R)-2-phosphoglycerate = (2R)-3-phosphoglycerate. Its pathway is carbohydrate degradation; glycolysis; pyruvate from D-glyceraldehyde 3-phosphate: step 3/5. Its function is as follows. Catalyzes the interconversion of 2-phosphoglycerate and 3-phosphoglycerate. The sequence is that of 2,3-bisphosphoglycerate-independent phosphoglycerate mutase from Helicobacter pylori (strain J99 / ATCC 700824) (Campylobacter pylori J99).